We begin with the raw amino-acid sequence, 249 residues long: Cytochrome c oxidase subunit 2 (249 aa).

The next 2 membrane-spanning stretches (helical) occupy residues 40-60 and 81-101; these read NIMF…YTIT and IIWT…SFIL. Cu cation is bound by residues His184, Cys219, Glu221, Cys223, His227, and Met230. Glu221 is a Mg(2+) binding site.

This sequence belongs to the cytochrome c oxidase subunit 2 family. In terms of assembly, component of the cytochrome c oxidase (complex IV, CIV), a multisubunit enzyme composed of a catalytic core of 3 subunits and several supernumerary subunits. The complex exists as a monomer or a dimer and forms supercomplexes (SCs) in the inner mitochondrial membrane with ubiquinol-cytochrome c oxidoreductase (cytochrome b-c1 complex, complex III, CIII). Cu cation serves as cofactor.

It is found in the mitochondrion inner membrane. The enzyme catalyses 4 Fe(II)-[cytochrome c] + O2 + 8 H(+)(in) = 4 Fe(III)-[cytochrome c] + 2 H2O + 4 H(+)(out). Functionally, component of the cytochrome c oxidase, the last enzyme in the mitochondrial electron transport chain which drives oxidative phosphorylation. The respiratory chain contains 3 multisubunit complexes succinate dehydrogenase (complex II, CII), ubiquinol-cytochrome c oxidoreductase (cytochrome b-c1 complex, complex III, CIII) and cytochrome c oxidase (complex IV, CIV), that cooperate to transfer electrons derived from NADH and succinate to molecular oxygen, creating an electrochemical gradient over the inner membrane that drives transmembrane transport and the ATP synthase. Cytochrome c oxidase is the component of the respiratory chain that catalyzes the reduction of oxygen to water. Electrons originating from reduced cytochrome c in the intermembrane space (IMS) are transferred via the dinuclear copper A center (CU(A)) of subunit 2 and heme A of subunit 1 to the active site in subunit 1, a binuclear center (BNC) formed by heme A3 and copper B (CU(B)). The BNC reduces molecular oxygen to 2 water molecules using 4 electrons from cytochrome c in the IMS and 4 protons from the mitochondrial matrix. The chain is Cytochrome c oxidase subunit 2 (COX2) from Vanderwaltozyma polyspora (strain ATCC 22028 / DSM 70294 / BCRC 21397 / CBS 2163 / NBRC 10782 / NRRL Y-8283 / UCD 57-17) (Kluyveromyces polysporus).